The following is a 679-amino-acid chain: DNA-directed RNA polymerase subunit beta' (679 aa).

Residues cysteine 69, cysteine 71, cysteine 87, and cysteine 90 each coordinate Zn(2+). Mg(2+)-binding residues include aspartate 489, aspartate 491, and aspartate 493.

It belongs to the RNA polymerase beta' chain family. RpoC1 subfamily. In plastids the minimal PEP RNA polymerase catalytic core is composed of four subunits: alpha, beta, beta', and beta''. When a (nuclear-encoded) sigma factor is associated with the core the holoenzyme is formed, which can initiate transcription. The cofactor is Mg(2+). Requires Zn(2+) as cofactor.

The protein localises to the plastid. It localises to the chloroplast. It carries out the reaction RNA(n) + a ribonucleoside 5'-triphosphate = RNA(n+1) + diphosphate. In terms of biological role, DNA-dependent RNA polymerase catalyzes the transcription of DNA into RNA using the four ribonucleoside triphosphates as substrates. The sequence is that of DNA-directed RNA polymerase subunit beta' from Oenothera argillicola (Appalachian evening primrose).